Consider the following 332-residue polypeptide: N-arachidonyl glycine receptor (332 aa).

Topologically, residues 1–26 (MTTPHSQAQPGLPIDPHPDEYKVAAL) are extracellular. A helical transmembrane segment spans residues 27–47 (VFYSCIFIIGLFVNVTALWVF). Residues 48-56 (SCTTKKRTT) are Cytoplasmic-facing. Residues 57-77 (VTVYMMNVALLDLVFIMSLPF) form a helical membrane-spanning segment. Topologically, residues 78 to 95 (RMLYYAKGEWPFGEYFCR) are extracellular. Cys-94 and Cys-173 form a disulfide bridge. The helical transmembrane segment at 96–116 (ILGALTVFYPSIALWLLAFIS) threads the bilayer. The Cytoplasmic segment spans residues 117 to 138 (ADRYMAIVQPKYAKELKNTCKA). A helical transmembrane segment spans residues 139–159 (VMACVGVWIMTLTTTIPLLLL). At 160-192 (YEDPDTASSTPPTCLKISDIIYLKAINALNFTR) the chain is on the extracellular side. An N-linked (GlcNAc...) asparagine glycan is attached at Asn-189. Residues 193-213 (LIFFFLIPLFIMIGCYLVIIH) form a helical membrane-spanning segment. At 214-233 (SLLHGKTSKLKPKVKEKSIR) the chain is on the cytoplasmic side. Residues 234 to 254 (IIITLMVQVLVCFMPFHICFA) traverse the membrane as a helical segment. Topologically, residues 255-269 (FLMLGGDENSYNPWG) are extracellular. Residues 270–290 (AFTTFLMNLSTCLDVILYYIV) traverse the membrane as a helical segment. Residues 291-332 (SKQFQARVISVMLYRNYLRSVRRKSFRSGSLRSLSNINSEML) lie on the Cytoplasmic side of the membrane. Residue Ser-323 is modified to Phosphoserine.

Belongs to the G-protein coupled receptor 1 family.

Its subcellular location is the cell membrane. It localises to the cytoplasmic vesicle membrane. G protein-coupled receptor (GPCR) that plays a role in diverse physiological processes particularly within the immune and nervous systems. Becomes active when triggered by various endogenous ligands including endocannabinoid N-arachidonyl glycine (NAGly), delta-9-tetrahydrocannabinol or resolvin D2/RvD2 derived from the omega-3 fatty acid docosahexaenoic acid (DHA). Upon RvD2 binding, facilitates the resolution of inflammation, aiding in tissue repair and homeostasis. Mechanistically, RvD2 ligation initiates Galphas protein coupling, activation of cAMP-PKA signaling pathway and phosphorylation of STAT3, leading to RvD2-stimulated macrophage phagocytosis. Mediates NAGly-induced process of reorganization of actin filaments and induction of acrosomal exocytosis. Activation by N-arachidonoyl glycine (NAGly) can also induce apoptosis in macrophages. Plays a role in homeostasis of CD8+ subsets of intraepithelial lymphocytes (IELs) (CD8alphaalpha and CD8alphabeta IELs) in small intestine by supporting preferential migration of CD8alphaalpha T-cells to intraepithelial compartment over lamina propria compartment, and by mediating their reconstitution into small intestine after bone marrow transplant. Participates also in hypotensive responses, mediating reduction in intraocular and blood pressure. This Bos taurus (Bovine) protein is N-arachidonyl glycine receptor (GPR18).